A 209-amino-acid chain; its full sequence is Orotate phosphoribosyltransferase (209 aa).

Residues Arg-96, Lys-100, His-102, and 122–130 (EDLISTGGS) each bind 5-phospho-alpha-D-ribose 1-diphosphate. Ser-126 contributes to the orotate binding site.

It belongs to the purine/pyrimidine phosphoribosyltransferase family. PyrE subfamily. Homodimer. Requires Mg(2+) as cofactor.

It carries out the reaction orotidine 5'-phosphate + diphosphate = orotate + 5-phospho-alpha-D-ribose 1-diphosphate. The protein operates within pyrimidine metabolism; UMP biosynthesis via de novo pathway; UMP from orotate: step 1/2. Catalyzes the transfer of a ribosyl phosphate group from 5-phosphoribose 1-diphosphate to orotate, leading to the formation of orotidine monophosphate (OMP). The sequence is that of Orotate phosphoribosyltransferase from Streptococcus pyogenes serotype M2 (strain MGAS10270).